The sequence spans 312 residues: Glyoxylate/hydroxypyruvate reductase A (312 aa).

Arg-227 is an active-site residue. The active-site Proton donor is the His-275.

This sequence belongs to the D-isomer specific 2-hydroxyacid dehydrogenase family. GhrA subfamily.

Its subcellular location is the cytoplasm. The catalysed reaction is glycolate + NADP(+) = glyoxylate + NADPH + H(+). It carries out the reaction (R)-glycerate + NAD(+) = 3-hydroxypyruvate + NADH + H(+). The enzyme catalyses (R)-glycerate + NADP(+) = 3-hydroxypyruvate + NADPH + H(+). Its function is as follows. Catalyzes the NADPH-dependent reduction of glyoxylate and hydroxypyruvate into glycolate and glycerate, respectively. In Escherichia coli O127:H6 (strain E2348/69 / EPEC), this protein is Glyoxylate/hydroxypyruvate reductase A.